The primary structure comprises 327 residues: Acetyl-coenzyme A carboxylase carboxyl transferase subunit beta (327 aa).

One can recognise a CoA carboxyltransferase N-terminal domain in the interval 24-293 (LWIKCPDTGQ…LTVTTAVEAP (270 aa)). The span at 293 to 311 (PAEAAAKAEPEATTTEQPV) shows a compositional bias: low complexity. The segment at 293–327 (PAEAAAKAEPEATTTEQPVAPAPTEPPAQPAAPQA) is disordered. Residues 312 to 327 (APAPTEPPAQPAAPQA) show a composition bias toward pro residues.

This sequence belongs to the AccD/PCCB family. As to quaternary structure, acetyl-CoA carboxylase is a heterohexamer composed of biotin carboxyl carrier protein (AccB), biotin carboxylase (AccC) and two subunits each of ACCase subunit alpha (AccA) and ACCase subunit beta (AccD).

It is found in the cytoplasm. It carries out the reaction N(6)-carboxybiotinyl-L-lysyl-[protein] + acetyl-CoA = N(6)-biotinyl-L-lysyl-[protein] + malonyl-CoA. It participates in lipid metabolism; malonyl-CoA biosynthesis; malonyl-CoA from acetyl-CoA: step 1/1. In terms of biological role, component of the acetyl coenzyme A carboxylase (ACC) complex. Biotin carboxylase (BC) catalyzes the carboxylation of biotin on its carrier protein (BCCP) and then the CO(2) group is transferred by the transcarboxylase to acetyl-CoA to form malonyl-CoA. The chain is Acetyl-coenzyme A carboxylase carboxyl transferase subunit beta from Rhodopseudomonas palustris (strain TIE-1).